We begin with the raw amino-acid sequence, 191 residues long: Fe/S biogenesis protein NfuA (191 aa).

[4Fe-4S] cluster-binding residues include cysteine 149 and cysteine 152.

It belongs to the NfuA family. In terms of assembly, homodimer. [4Fe-4S] cluster serves as cofactor.

In terms of biological role, involved in iron-sulfur cluster biogenesis. Binds a 4Fe-4S cluster, can transfer this cluster to apoproteins, and thereby intervenes in the maturation of Fe/S proteins. Could also act as a scaffold/chaperone for damaged Fe/S proteins. This chain is Fe/S biogenesis protein NfuA, found in Enterobacter sp. (strain 638).